Consider the following 103-residue polypeptide: MHKLTPDEAIDIAYDIFLEMAGEHLEPADILLFNLQFEERGAVEMVETSDRWEEEIGTLIDPTAFAEVWVGLVNDKDEMDDVFARFLISHQAENREYHVIWKE.

The protein belongs to the putative dsDNA mimic protein family.

Its function is as follows. May act as a double-stranded DNA (dsDNA) mimic. Probably regulates the activity of a dsDNA-binding protein. This chain is Putative double-stranded DNA mimic protein HD_0986, found in Haemophilus ducreyi (strain 35000HP / ATCC 700724).